Reading from the N-terminus, the 221-residue chain is Phosphate-specific transport system accessory protein PhoU homolog 1 (221 aa).

The protein belongs to the PhoU family. Homodimer.

It is found in the cytoplasm. In terms of biological role, plays a role in the regulation of phosphate uptake. In this role, it may bind, possibly as a chaperone, to PhoR, PhoP or a PhoR-PhoP complex to promote dephosphorylation of phospho-PhoP, or inhibit formation of the PhoR-PhoP transitory complex. In Mycobacterium bovis (strain ATCC BAA-935 / AF2122/97), this protein is Phosphate-specific transport system accessory protein PhoU homolog 1 (phoU1).